The sequence spans 545 residues: MAKEILFNIEARDQLKKGVDALANAVKVTLGPKGRNVIIEKKFGAPHITKDGVTVAKEIELTDAYQNTGAQLVKEVASKTGDDAGDGTTTATVLAQAIIAEGLKNVTAGASPMDIKRGIDKAVAKVVDSIKHQAEKVGDNYDKIEQVATVSANNDPVIGKLIADAMRKVSKDGVITIEEAKGTDTTIGVVEGMQFDRGYLSAYFVTNTEKMECEMEKPYILIYDKKISNLKDFLPILEPAVQSGRPLLVIAEDVDSEALTTLVVNRLRSQLKICAVKAPGFGDRRKEMLEDIAVLTGGVVISEEKGLKLEQATIEMLGTADKVTVSKDNTTIVNGAGAKENIKERCDQIKAQIAATKSDYDREKLQERLAKLSGGVAVLYVGAASEVEMKEKKDRVDDALRATRAAIEEGIVAGGGVAYIRAIESLDGLKGENDDETTGIAIIKRAIEEPLRQIVANAGKEGAVVVQKVSEGKGDFGYNARTDVYENMHAAGVVDPAKVTRVALENAASIAGMFLTTECVIVEKKEDKPEMPMGAPGMGGMGGMM.

Residues 29–32, K50, 86–90, G415, and D495 each bind ATP; these read TLGP and DGTTT.

The protein belongs to the chaperonin (HSP60) family. In terms of assembly, forms a cylinder of 14 subunits composed of two heptameric rings stacked back-to-back. Interacts with the co-chaperonin GroES.

Its subcellular location is the cytoplasm. It carries out the reaction ATP + H2O + a folded polypeptide = ADP + phosphate + an unfolded polypeptide.. Together with its co-chaperonin GroES, plays an essential role in assisting protein folding. The GroEL-GroES system forms a nano-cage that allows encapsulation of the non-native substrate proteins and provides a physical environment optimized to promote and accelerate protein folding. This Bacteroides fragilis (strain ATCC 25285 / DSM 2151 / CCUG 4856 / JCM 11019 / LMG 10263 / NCTC 9343 / Onslow / VPI 2553 / EN-2) protein is Chaperonin GroEL.